The primary structure comprises 895 residues: Androgen receptor (895 aa).

Residues 1 to 533 (MEVQLGLGRV…PIDYYFPPQK (533 aa)) are modulating. Residues 1 to 562 (MEVQLGLGRV…GSCKVFFKRA (562 aa)) are interaction with ZNF318. Disordered regions lie at residues 33 to 150 (VIQN…LSLL) and 178 to 211 (QQQQQEAVSEGSSSGRAREASGAPTSSKDNYLEG). 2 stretches are compositionally biased toward low complexity: residues 44 to 81 (AASAAPPGASLQQQQQQQQETSPRQQQQQQQGEDGSPQ) and 178 to 200 (QQQQQEAVSEGSSSGRAREASGA). S65 is subject to Phosphoserine; by CDK9. At S79 the chain carries Phosphoserine. Positions 201-211 (PTSSKDNYLEG) are enriched in polar residues. Residue Y208 is modified to Phosphotyrosine; by CSK. Phosphoserine is present on S241. Y252 carries the phosphotyrosine; by CSK and TNK2 modification. Phosphotyrosine; by CSK occurs at positions 292, 331, 342, and 347. Residue Y348 is modified to Phosphotyrosine; by CSK and TNK2. K371 is covalently cross-linked (Glycyl lysine isopeptide (Lys-Gly) (interchain with G-Cter in SUMO)). The residue at position 378 (Y378) is a Phosphotyrosine; by CSK. A Glycyl lysine isopeptide (Lys-Gly) (interchain with G-Cter in SUMO) cross-link involves residue K496. Y510 and Y527 each carry phosphotyrosine; by CSK. The interaction with LPXN stretch occupies residues 527-894 (YYFPPQKTCL…GKVKPIYFHT (368 aa)). The segment at residues 534 to 607 (TCLICGDEAS…AGMTLGARKL (74 aa)) is a DNA-binding region (nuclear receptor). 2 consecutive NR C4-type zinc fingers follow at residues 535–555 (CLICGDEASGCHYGALTCGSC) and 571–595 (CASRNDCTIDKFRRKNCPSCRLRKC). Residues 547–637 (YGALTCGSCK…TEETAQKLTV (91 aa)) are interaction with HIPK3. Residues 567-894 (QKYLCASRND…GKVKPIYFHT (328 aa)) form an interaction with CCAR1 region. Residues 600–894 (MTLGARKLKK…GKVKPIYFHT (295 aa)) form an interaction with KAT7 region. S626 carries the phosphoserine; by STK4/MST1 modification. The 232-residue stretch at 644–875 (ECQPIFLNVL…DFPEMMAEII (232 aa)) folds into the NR LBD domain. The 17beta-hydroxy-5alpha-androstan-3-one site is built by N681 and R728. Glycyl lysine isopeptide (Lys-Gly) (interchain with G-Cter in ubiquitin) cross-links involve residues K821 and K823. Residue T853 coordinates 17beta-hydroxy-5alpha-androstan-3-one. At Y891 the chain carries Phosphotyrosine; by CSK.

Belongs to the nuclear hormone receptor family. NR3 subfamily. Binds DNA as a homodimer. Part of a ternary complex containing AR, EFCAB6/DJBP and PARK7. Interacts with HIPK3 and NR0B2 in the presence of androgen. The ligand binding domain interacts with KAT7/HBO1 in the presence of dihydrotestosterone. Interacts with EFCAB6/DJBP, PQBP1, RANBP9, RBAK, SPDEF, SRA1, TGFB1I1 and RREB1. Interacts with ZMIZ1/ZIMP10 and ZMIZ2/ZMIP7 which both enhance its transactivation activity. Interacts with SLC30A9 and RAD54L2/ARIP4. Interacts with MACROD1 (via macro domain). Interacts via the ligand-binding domain with LXXLL and FXXLF motifs from NCOA1, NCOA2, NCOA3 and MAGEA11. Interacts (via nuclear receptor DNA binding domain and nuclear receptor ligand binding domain) with NCOA4. The AR N-terminal poly-Gln region binds Ran resulting in enhancement of AR-mediated transactivation. Ran-binding decreases as the poly-Gln length increases. Interacts with HIP1 (via coiled coil domain). Interacts (via ligand-binding domain) with TRIM68. Interacts with TNK2. Interacts with USP26. Interacts with RNF6. Interacts (regulated by RNF6 probably through polyubiquitination) with RNF14; regulates AR transcriptional activity. Interacts with PRMT2 and TRIM24. Interacts with RACK1. Interacts with RANBP10; this interaction enhances dihydrotestosterone-induced AR transcriptional activity. Interacts with PRPF6 in a hormone-independent way; this interaction enhances dihydrotestosterone-induced AR transcriptional activity. Interacts with STK4/MST1. Interacts with ZIPK/DAPK3. Interacts with LPXN. Interacts with MAK. Part of a complex containing AR, MAK and NCOA3. Interacts with CRY1. Interacts with CCAR1 and GATA2. Interacts with ZNF318. Interacts with BUD31. Interacts with ARID4A. Interacts with ARID4B. Interacts (via NR LBD domain) with ZBTB7A; the interaction is direct and androgen-dependent. Interacts with NCOR1. Interacts with NCOR2. Interacts with CRY2 in a ligand-dependent manner. Phosphorylated in prostate cancer cells in response to several growth factors including EGF. Phosphorylation is induced by c-Src kinase (CSK). Tyr-510 is one of the major phosphorylation sites and an increase in phosphorylation and Src kinase activity is associated with prostate cancer progression. Phosphorylation by TNK2 enhances the DNA-binding and transcriptional activity. Phosphorylation at Ser-65 by CDK9 regulates AR promoter selectivity and cell growth. Post-translationally, sumoylated on Lys-371 (major) and Lys-496. Ubiquitinated. Deubiquitinated by USP26. 'Lys-6' and 'Lys-27'-linked polyubiquitination by RNF6 modulates AR transcriptional activity and specificity. In terms of processing, palmitoylated by ZDHHC7 and ZDHHC21. Palmitoylation is required for plasma membrane targeting and for rapid intracellular signaling via ERK and AKT kinases and cAMP generation.

It localises to the nucleus. The protein resides in the cytoplasm. Functionally, steroid hormone receptors are ligand-activated transcription factors that regulate eukaryotic gene expression and affect cellular proliferation and differentiation in target tissues. Transcription factor activity is modulated by bound coactivator and corepressor proteins like ZBTB7A that recruits NCOR1 and NCOR2 to the androgen response elements/ARE on target genes, negatively regulating androgen receptor signaling and androgen-induced cell proliferation. Transcription activation is also down-regulated by NR0B2. Activated, but not phosphorylated, by HIPK3 and ZIPK/DAPK3. The protein is Androgen receptor (AR) of Macaca mulatta (Rhesus macaque).